The chain runs to 154 residues: MRCPFCGNDDTQVKDSRPTEDNSAIRRRRFCPACGARFTTFERVQLRELTVVKSGGSREPFDREKLLRSMRIALRKRPVDADRIDRVVNSIVRQLESSGETEIPSSQIGEMVMVHLGTLDKVAYVRYASVYKDFREVTDFNQFVETLRTDAPAG.

The disordered stretch occupies residues 1 to 22 (MRCPFCGNDDTQVKDSRPTEDN). The segment at 3-34 (CPFCGNDDTQVKDSRPTEDNSAIRRRRFCPAC) is a zinc-finger region. Basic and acidic residues predominate over residues 11–22 (TQVKDSRPTEDN). The region spanning 49–139 (LTVVKSGGSR…VYKDFREVTD (91 aa)) is the ATP-cone domain.

This sequence belongs to the NrdR family. The cofactor is Zn(2+).

Its function is as follows. Negatively regulates transcription of bacterial ribonucleotide reductase nrd genes and operons by binding to NrdR-boxes. The polypeptide is Transcriptional repressor NrdR (Rhodospirillum centenum (strain ATCC 51521 / SW)).